A 530-amino-acid chain; its full sequence is Plexin domain-containing protein 2 (530 aa).

A signal peptide spans 1 to 30; sequence MARFRRADLAAAGVMLLCHFLTDRFQFAHG. Topologically, residues 31–455 are extracellular; sequence EPGHHTNDWI…AEKKGGTLHA (425 aa). N-linked (GlcNAc...) asparagine glycosylation is found at asparagine 103 and asparagine 160. Residues 327–372 enclose the PSI domain; sequence TCLQFNGCGPCVSSQIGFNCSWCSKLQRCSSGFDRHRQDWVDSGCP. A compositionally biased stretch (basic and acidic residues) spans 378 to 387; sequence KEKMCEKTEP. Residues 378-399 are disordered; it reads KEKMCEKTEPGETSQTTTTSHT. Positions 390-399 are enriched in low complexity; the sequence is TSQTTTTSHT. Residues 456-476 traverse the membrane as a helical segment; sequence GLIVGILILVLIIAAAILVTV. Topologically, residues 477–530 are cytoplasmic; the sequence is YMYHHPTSAASIFFIERRPSRWPAMKFRRGSGHPAYAEVEPVGEKEGFIVSEQC. Serine 507 carries the phosphoserine modification.

The protein belongs to the plexin family. In terms of assembly, interacts with CTTN. In terms of tissue distribution, expressed in tumor endothelium and in vessels of some normal tissues, such as the muscle and lung.

Its subcellular location is the membrane. Functionally, may play a role in tumor angiogenesis. The chain is Plexin domain-containing protein 2 (Plxdc2) from Mus musculus (Mouse).